The chain runs to 495 residues: Probable cytochrome P450 4s3 (495 aa).

Heme-binding residues include glutamate 307 and cysteine 436.

Belongs to the cytochrome P450 family. It depends on heme as a cofactor.

Its subcellular location is the endoplasmic reticulum membrane. The protein resides in the microsome membrane. May be involved in the metabolism of insect hormones and in the breakdown of synthetic insecticides. The sequence is that of Probable cytochrome P450 4s3 (Cyp4s3) from Drosophila melanogaster (Fruit fly).